We begin with the raw amino-acid sequence, 166 residues long: Interferon gamma (166 aa).

Residues 1–23 (MKYTSYILAFQLCIILGSSSCYS) form the signal peptide. Gln24 is subject to Pyrrolidone carboxylic acid. N-linked (GlcNAc...) asparagine glycans are attached at residues Asn39, Asn44, and Asn106.

The protein belongs to the type II (or gamma) interferon family. In terms of assembly, homodimer. Released primarily from activated T lymphocytes.

The protein resides in the secreted. Functionally, produced by lymphocytes activated by specific antigens or mitogens. IFN-gamma, in addition to having antiviral activity, has important immunoregulatory functions. It is a potent activator of macrophages, it has antiproliferative effects on transformed cells and it can potentiate the antiviral and antitumor effects of the type I interferons. The sequence is that of Interferon gamma (IFNG) from Marmota monax (Woodchuck).